Here is a 463-residue protein sequence, read N- to C-terminus: MDQSNRYADLTLTEEKLVADGNHLLVAYRLKPAAGYGFLEVAAHVAAESSTGTNVEVSTTDDFTRGVDALVYEIDEAAFGDKGGLMKIAYPVDLFDPNLIDGHYNVSHMWSLILGNNQGMGDHEGLRMLDFLVPEKMVKRFDGPATDISDLWKVLGRPEVDGGYIAGTIIKPKLGLRPEPFAKACYDFWLGGDFIKNDEPQANQNFCPMEVVIPKVAEAMDRAQQATGQAKLFSANVTADFHEEMIKRGEYVLGEFAKYGNEKHVAFLVDGFVTGPAGVTTSRRAFPDTYLHFHRAGHGAVTSYKSPMGMDPLCYMKLARLMGASGIHTGTMGYGKMEGHNDERVLAYMLERDECQGPYFYQKWYGMKPTTPIISGGMDALRLPGFFENLGHGNVINTCGGGSFGHIDSPAAGGISLGQAYACWKTGAEPIEAPREFARAFESFPGDADKIFPGWREKLGVHK.

Asn116 serves as a coordination point for substrate. Lys171 acts as the Proton acceptor in catalysis. Residue Lys173 participates in substrate binding. 3 residues coordinate Mg(2+): Lys196, Asp198, and Glu199. N6-carboxylysine is present on Lys196. Catalysis depends on His294, which acts as the Proton acceptor. The substrate site is built by Arg295, His328, and Ser375.

Belongs to the RuBisCO large chain family. Type II subfamily. In terms of assembly, homodimer. Mg(2+) serves as cofactor.

It catalyses the reaction 2 (2R)-3-phosphoglycerate + 2 H(+) = D-ribulose 1,5-bisphosphate + CO2 + H2O. It carries out the reaction D-ribulose 1,5-bisphosphate + O2 = 2-phosphoglycolate + (2R)-3-phosphoglycerate + 2 H(+). Its function is as follows. RuBisCO catalyzes two reactions: the carboxylation of D-ribulose 1,5-bisphosphate, the primary event in carbon dioxide fixation, as well as the oxidative fragmentation of the pentose substrate. Both reactions occur simultaneously and in competition at the same active site. The sequence is that of Ribulose bisphosphate carboxylase from Hydrogenovibrio marinus.